The following is a 443-amino-acid chain: tRNA(Ile2) 2-agmatinylcytidine synthetase TiaS (443 aa).

This sequence belongs to the TiaS family.

The protein localises to the cytoplasm. It carries out the reaction cytidine(34) in tRNA(Ile2) + agmatine + ATP + H2O = 2-agmatinylcytidine(34) in tRNA(Ile2) + AMP + 2 phosphate + 2 H(+). In terms of biological role, ATP-dependent agmatine transferase that catalyzes the formation of 2-agmatinylcytidine (agm2C) at the wobble position (C34) of tRNA(Ile2), converting the codon specificity from AUG to AUA. This chain is tRNA(Ile2) 2-agmatinylcytidine synthetase TiaS, found in Saccharolobus islandicus (strain L.S.2.15 / Lassen #1) (Sulfolobus islandicus).